A 327-amino-acid chain; its full sequence is Beta-ketoacyl-[acyl-carrier-protein] synthase III (327 aa).

Active-site residues include Cys-112 and His-253. The ACP-binding stretch occupies residues 254–258; it reads QANER. Asn-283 is an active-site residue.

This sequence belongs to the thiolase-like superfamily. FabH family. As to quaternary structure, homodimer.

The protein resides in the cytoplasm. It carries out the reaction malonyl-[ACP] + acetyl-CoA + H(+) = 3-oxobutanoyl-[ACP] + CO2 + CoA. Its pathway is lipid metabolism; fatty acid biosynthesis. Functionally, catalyzes the condensation reaction of fatty acid synthesis by the addition to an acyl acceptor of two carbons from malonyl-ACP. Catalyzes the first condensation reaction which initiates fatty acid synthesis and may therefore play a role in governing the total rate of fatty acid production. Possesses both acetoacetyl-ACP synthase and acetyl transacylase activities. Its substrate specificity determines the biosynthesis of branched-chain and/or straight-chain of fatty acids. The polypeptide is Beta-ketoacyl-[acyl-carrier-protein] synthase III (Chlamydia muridarum (strain MoPn / Nigg)).